The chain runs to 540 residues: Chaperonin GroEL (540 aa).

ATP contacts are provided by residues Thr29 to Pro32, Asp86 to Thr90, Gly413, Asn476 to Ala478, and Asp492.

Belongs to the chaperonin (HSP60) family. As to quaternary structure, forms a cylinder of 14 subunits composed of two heptameric rings stacked back-to-back. Interacts with the co-chaperonin GroES.

Its subcellular location is the cytoplasm. It carries out the reaction ATP + H2O + a folded polypeptide = ADP + phosphate + an unfolded polypeptide.. Together with its co-chaperonin GroES, plays an essential role in assisting protein folding. The GroEL-GroES system forms a nano-cage that allows encapsulation of the non-native substrate proteins and provides a physical environment optimized to promote and accelerate protein folding. The protein is Chaperonin GroEL of Tsukamurella paurometabola (Corynebacterium paurometabolum).